Reading from the N-terminus, the 602-residue chain is ATP-dependent zinc metalloprotease FtsH 3 (602 aa).

Over 1 to 18 (MNSWFLQVSKRLGPAGRR) the chain is Cytoplasmic. A helical transmembrane segment spans residues 19–39 (LWLLGFMGVVLAVTLGLALRA). Residues 40-117 (ARESATQRTA…DFASREDPSR (78 aa)) are Periplasmic-facing. The chain crosses the membrane as a helical span at residues 118-138 (AASAVLPVVVLAAVGFALFTV). At 139–602 (SRRRSPKVFS…RRPRPEDQAA (464 aa)) the chain is on the cytoplasmic side. Position 202–209 (202–209 (GEPGTGKT)) interacts with ATP. Position 425 (histidine 425) interacts with Zn(2+). Residue glutamate 426 is part of the active site. Positions 429 and 501 each coordinate Zn(2+).

This sequence in the central section; belongs to the AAA ATPase family. In the C-terminal section; belongs to the peptidase M41 family. Homohexamer. It depends on Zn(2+) as a cofactor.

It localises to the cell inner membrane. In terms of biological role, acts as a processive, ATP-dependent zinc metallopeptidase for both cytoplasmic and membrane proteins. Plays a role in the quality control of integral membrane proteins. This is ATP-dependent zinc metalloprotease FtsH 3 from Sorangium cellulosum (strain So ce56) (Polyangium cellulosum (strain So ce56)).